A 122-amino-acid chain; its full sequence is Acidic phospholipase A2 Tpu-E6c (122 aa).

Intrachain disulfides connect C26–C115, C28–C44, C43–C95, C49–C122, C50–C88, C57–C81, and C75–C86. The Ca(2+) site is built by Y27, G29, and G31. H47 is an active-site residue. D48 provides a ligand contact to Ca(2+). D89 is a catalytic residue.

As to quaternary structure, monomer. Requires Ca(2+) as cofactor. In terms of tissue distribution, expressed by the venom gland.

The protein resides in the secreted. It catalyses the reaction a 1,2-diacyl-sn-glycero-3-phosphocholine + H2O = a 1-acyl-sn-glycero-3-phosphocholine + a fatty acid + H(+). Functionally, snake venom phospholipase A2 (PLA2) that impairs hemostasis. It weakly inhibits ADP-induced platelet aggregation when tested on platelet rich plasma from human and rabbit blood (15-25% of inhibition at 5-10 ug of enzyme), and dose-dependently inhibits blood coagulation, possibly by inhibiting thrombin activation. Exhibits high hydrolytic activities toward L-dipalmitoyl phosphatidylcholine. PLA2 catalyzes the calcium-dependent hydrolysis of the 2-acyl groups in 3-sn-phosphoglycerides. The protein is Acidic phospholipase A2 Tpu-E6c of Craspedocephalus puniceus (Flat-nosed pitviper).